We begin with the raw amino-acid sequence, 324 residues long: Cytochrome f (324 aa).

A signal peptide spans Met1–Ala30. Heme-binding residues include Tyr42, Cys62, Cys65, and His66. A helical membrane pass occupies residues Val290–Lys310.

Belongs to the cytochrome f family. As to quaternary structure, the 4 large subunits of the cytochrome b6-f complex are cytochrome b6, subunit IV (17 kDa polypeptide, PetD), cytochrome f and the Rieske protein, while the 4 small subunits are PetG, PetL, PetM and PetN. The complex functions as a dimer. The cofactor is heme.

It localises to the cellular thylakoid membrane. In terms of biological role, component of the cytochrome b6-f complex, which mediates electron transfer between photosystem II (PSII) and photosystem I (PSI), cyclic electron flow around PSI, and state transitions. The polypeptide is Cytochrome f (Synechococcus elongatus (strain ATCC 33912 / PCC 7942 / FACHB-805) (Anacystis nidulans R2)).